Consider the following 201-residue polypeptide: Probable molybdenum cofactor guanylyltransferase (201 aa).

Residues 16–18, Lys-28, Asp-75, and Asp-107 each bind GTP; that span reads LAG. Residue Asp-107 participates in Mg(2+) binding.

It belongs to the MobA family. Mg(2+) is required as a cofactor.

The protein localises to the cytoplasm. It catalyses the reaction Mo-molybdopterin + GTP + H(+) = Mo-molybdopterin guanine dinucleotide + diphosphate. In terms of biological role, transfers a GMP moiety from GTP to Mo-molybdopterin (Mo-MPT) cofactor (Moco or molybdenum cofactor) to form Mo-molybdopterin guanine dinucleotide (Mo-MGD) cofactor. The polypeptide is Probable molybdenum cofactor guanylyltransferase (Mycobacterium ulcerans (strain Agy99)).